A 155-amino-acid polypeptide reads, in one-letter code: Ribosome maturation factor RimP (155 aa).

Belongs to the RimP family.

It localises to the cytoplasm. Required for maturation of 30S ribosomal subunits. The protein is Ribosome maturation factor RimP of Gloeothece citriformis (strain PCC 7424) (Cyanothece sp. (strain PCC 7424)).